The chain runs to 332 residues: Ketol-acid reductoisomerase (NADP(+)) (332 aa).

Residues 1-182 (MAVIYYDKDC…GSNRAGILET (182 aa)) enclose the KARI N-terminal Rossmann domain. NADP(+) is bound by residues 25–28 (YGAQ) and 83–86 (DTSQ). Residue H108 is part of the active site. G134 is an NADP(+) binding site. Residues 183–328 (TFAEETETDL…AELRSMMSWL (146 aa)) form the KARI C-terminal knotted domain. Mg(2+) contacts are provided by D191, E195, E227, and E231. S252 serves as a coordination point for substrate.

Belongs to the ketol-acid reductoisomerase family. Mg(2+) is required as a cofactor.

It carries out the reaction (2R)-2,3-dihydroxy-3-methylbutanoate + NADP(+) = (2S)-2-acetolactate + NADPH + H(+). The catalysed reaction is (2R,3R)-2,3-dihydroxy-3-methylpentanoate + NADP(+) = (S)-2-ethyl-2-hydroxy-3-oxobutanoate + NADPH + H(+). It participates in amino-acid biosynthesis; L-isoleucine biosynthesis; L-isoleucine from 2-oxobutanoate: step 2/4. It functions in the pathway amino-acid biosynthesis; L-valine biosynthesis; L-valine from pyruvate: step 2/4. Functionally, involved in the biosynthesis of branched-chain amino acids (BCAA). Catalyzes an alkyl-migration followed by a ketol-acid reduction of (S)-2-acetolactate (S2AL) to yield (R)-2,3-dihydroxy-isovalerate. In the isomerase reaction, S2AL is rearranged via a Mg-dependent methyl migration to produce 3-hydroxy-3-methyl-2-ketobutyrate (HMKB). In the reductase reaction, this 2-ketoacid undergoes a metal-dependent reduction by NADPH to yield (R)-2,3-dihydroxy-isovalerate. The chain is Ketol-acid reductoisomerase (NADP(+)) from Dehalococcoides mccartyi (strain ATCC BAA-2100 / JCM 16839 / KCTC 5957 / BAV1).